A 273-amino-acid chain; its full sequence is GTP cyclohydrolase MptA (273 aa).

It belongs to the GTP cyclohydrolase IV family. In terms of assembly, homodimer. It depends on Fe(2+) as a cofactor.

It catalyses the reaction GTP + H2O = 7,8-dihydroneopterin 2',3'-cyclic phosphate + formate + diphosphate + H(+). It functions in the pathway cofactor biosynthesis; 5,6,7,8-tetrahydromethanopterin biosynthesis. Functionally, converts GTP to 7,8-dihydro-D-neopterin 2',3'-cyclic phosphate, the first intermediate in the biosynthesis of coenzyme methanopterin. The polypeptide is GTP cyclohydrolase MptA (Picrophilus torridus (strain ATCC 700027 / DSM 9790 / JCM 10055 / NBRC 100828 / KAW 2/3)).